A 454-amino-acid polypeptide reads, in one-letter code: Response regulator PleD (454 aa).

Response regulatory domains follow at residues 4 to 120 and 155 to 269; these read RILV…RSLT and RVLI…KTQI. Mg(2+) is bound by residues Asp-9, Asp-10, Asp-53, and Met-55. Position 53 is a 4-aspartylphosphate (Asp-53). One can recognise a GGDEF domain in the interval 319–454; the sequence is DPVSALLIDI…GRNAVVGKAA (136 aa). 2 residues coordinate substrate: Asn-335 and Asp-344. Glu-370 (proton acceptor) is an active-site residue.

In terms of assembly, homodimer. Inactive monomer in solution. In terms of processing, phosphorylated by PleC and DivJ. Phosphorylation stimulates cyclase activity.

The protein localises to the cytoplasm. The enzyme catalyses 2 GTP = 3',3'-c-di-GMP + 2 diphosphate. It functions in the pathway purine metabolism; 3',5'-cyclic di-GMP biosynthesis. With respect to regulation, allosterically inhibited by the product c-di-GMP. Functionally, response regulator that is part of a signal transduction pathway controlling cell differentiation in the swarmer-to-stalked cell transition. In terms of biological role, catalyzes the condensation of two GTP molecules to the cyclic dinucleotide di-GMP (c-di-GMP), which acts as a secondary messenger. The chain is Response regulator PleD (pleD) from Caulobacter vibrioides (strain ATCC 19089 / CIP 103742 / CB 15) (Caulobacter crescentus).